The following is a 306-amino-acid chain: Cytochrome P450 monooxygenase aclO (306 aa).

C237 is a heme binding site.

This sequence belongs to the cytochrome P450 family. It depends on heme as a cofactor.

It participates in mycotoxin biosynthesis. Its function is as follows. Cytochrome P450 monooxygenase; part of the gene cluster that mediates the biosynthesis of aspirochlorine (or antibiotic A30641), an unusual halogenated spiro compound with distinctive antifungal properties due to selective inhibition of protein biosynthesis, and which is also active against bacteria, viruses, and murine tumor cells. The non-ribosomal peptide synthetase (NRPS) aclP is responsible the formation of the diketopiperazine (DKP) core from the condensation of 2 phenylalanine residues. One Phe residue is tailored into chlorotyrosine by hydroxylation and chlorination, whereas the second Phe undergoes an unprecedented C-C bond cleavage to be converted into glycine. After formation of the DKP, sulfur is incorporated into the DKP by conjugation with glutathione by aclG, followed by its stepwise degradation to the thiol by aclI, aclJ and aclK, and the dithiol oxidation by aclT. In addition, oxygenases (aclB, aclC, aclL and aclO) and O-methyltransferases (aclM and aclU) act as tailoring enzymes to produce the intermediate dechloroaspirochlorine. Ultimately, chlorination of dechloroaspirochlorine by the halogenase aclH is the last step in the aspirochlorine pathway. This is Cytochrome P450 monooxygenase aclO from Aspergillus oryzae (strain ATCC 42149 / RIB 40) (Yellow koji mold).